A 226-amino-acid chain; its full sequence is Ribosomal RNA small subunit methyltransferase Nep1 (226 aa).

Residues Gly176, Gly181, and 197-202 (IYEESL) contribute to the S-adenosyl-L-methionine site.

It belongs to the class IV-like SAM-binding methyltransferase superfamily. RNA methyltransferase NEP1 family. In terms of assembly, homodimer.

It catalyses the reaction a pseudouridine in rRNA + S-adenosyl-L-methionine = an N(1)-methylpseudouridine in rRNA + S-adenosyl-L-homocysteine + H(+). Methyltransferase involved in ribosomal biogenesis. Specifically catalyzes the N1-methylation of the pseudouridine corresponding to position 914 in M.jannaschii 16S rRNA. The polypeptide is Ribosomal RNA small subunit methyltransferase Nep1 (Methanothrix thermoacetophila (strain DSM 6194 / JCM 14653 / NBRC 101360 / PT) (Methanosaeta thermophila)).